We begin with the raw amino-acid sequence, 363 residues long: tRNA dimethylallyltransferase (363 aa).

An ATP-binding site is contributed by 65–72 (GPTASGKS). Substrate is bound at residue 67–72 (TASGKS). 2 interaction with substrate tRNA regions span residues 90 to 93 (DSMQ) and 214 to 218 (QRLIR).

Belongs to the IPP transferase family. In terms of assembly, monomer. The cofactor is Mg(2+).

It catalyses the reaction adenosine(37) in tRNA + dimethylallyl diphosphate = N(6)-dimethylallyladenosine(37) in tRNA + diphosphate. In terms of biological role, catalyzes the transfer of a dimethylallyl group onto the adenine at position 37 in tRNAs that read codons beginning with uridine, leading to the formation of N6-(dimethylallyl)adenosine (i(6)A). This Rickettsia massiliae (strain Mtu5) protein is tRNA dimethylallyltransferase.